A 254-amino-acid polypeptide reads, in one-letter code: tRNA 2'-phosphotransferase 1 (254 aa).

Position 1 is an N-acetylmethionine (Met1). Disordered regions lie at residues 1–30 (MNSFGGRRRETAGPKGRRAHRPPQDQDRDV) and 225–254 (RKPLSLAGNEEKEHQRDSKHSSRGRGMTQQ). Over residues 233–244 (NEEKEHQRDSKH) the composition is skewed to basic and acidic residues.

This sequence belongs to the KptA/TPT1 family.

The catalysed reaction is 2'-phospho-[ligated tRNA] + NAD(+) = mature tRNA + ADP-alpha-D-ribose 1'',2''-cyclic phosphate + nicotinamide. In terms of biological role, catalyzes the last step of tRNA splicing, the transfer of the splice junction 2'-phosphate from ligated tRNA to NAD to produce ADP-ribose 1''-2'' cyclic phosphate. The protein is tRNA 2'-phosphotransferase 1 (TRPT1) of Bos taurus (Bovine).